We begin with the raw amino-acid sequence, 497 residues long: Protein root UVB sensitive 6 (497 aa).

The protein belongs to the RUS1 family.

Its function is as follows. Required for normal embryo development. The polypeptide is Protein root UVB sensitive 6 (Arabidopsis thaliana (Mouse-ear cress)).